The following is a 547-amino-acid chain: Chaperonin GroEL (547 aa).

ATP contacts are provided by residues 30–33, Lys51, 87–91, Gly415, 479–481, and Asp495; these read TLGP, DGTTT, and NAA.

This sequence belongs to the chaperonin (HSP60) family. In terms of assembly, forms a cylinder of 14 subunits composed of two heptameric rings stacked back-to-back. Interacts with the co-chaperonin GroES.

It localises to the cytoplasm. The catalysed reaction is ATP + H2O + a folded polypeptide = ADP + phosphate + an unfolded polypeptide.. Its function is as follows. Together with its co-chaperonin GroES, plays an essential role in assisting protein folding. The GroEL-GroES system forms a nano-cage that allows encapsulation of the non-native substrate proteins and provides a physical environment optimized to promote and accelerate protein folding. The sequence is that of Chaperonin GroEL from Nitratidesulfovibrio vulgaris (strain ATCC 29579 / DSM 644 / CCUG 34227 / NCIMB 8303 / VKM B-1760 / Hildenborough) (Desulfovibrio vulgaris).